The following is an 81-amino-acid chain: Saposin-C (81 aa).

Residues 1–81 form the Saposin B-type domain; sequence ESVTCKACEY…CSELGLCMSG (81 aa). Cystine bridges form between Cys5/Cys78, Cys8/Cys72, and Cys36/Cys47. N-linked (GlcNAc...) asparagine glycosylation occurs at Asn22.

Saposin-A and saposin-C stimulate the hydrolysis of glucosylceramide by beta-glucosylceramidase (EC 3.2.1.45) and galactosylceramide by beta-galactosylceramidase (EC 3.2.1.46). Saposin-C apparently acts by combining with the enzyme and acidic lipid to form an activated complex, rather than by solubilizing the substrate. The chain is Saposin-C (PSAP) from Cavia porcellus (Guinea pig).